The primary structure comprises 447 residues: Phosphoglucosamine mutase (447 aa).

S101 acts as the Phosphoserine intermediate in catalysis. The Mg(2+) site is built by S101, D242, D244, and D246. S101 carries the post-translational modification Phosphoserine.

This sequence belongs to the phosphohexose mutase family. Requires Mg(2+) as cofactor. In terms of processing, activated by phosphorylation.

The catalysed reaction is alpha-D-glucosamine 1-phosphate = D-glucosamine 6-phosphate. Catalyzes the conversion of glucosamine-6-phosphate to glucosamine-1-phosphate. The chain is Phosphoglucosamine mutase from Azorhizobium caulinodans (strain ATCC 43989 / DSM 5975 / JCM 20966 / LMG 6465 / NBRC 14845 / NCIMB 13405 / ORS 571).